Reading from the N-terminus, the 370-residue chain is Accessory Sec system protein translocase subunit SecY2 (370 aa).

A run of 9 helical transmembrane segments spans residues 17 to 37 (IIFT…PAIT), 65 to 85 (VFSL…LFYY), 105 to 125 (IFTL…LLSH), 134 to 154 (WLII…SDLN), 155 to 175 (MRFG…RSIM), 188 to 208 (LLIS…FIEI), 240 to 260 (IAIM…NLIV), 276 to 296 (FSTP…SYGI), and 339 to 359 (WIGA…TLLI).

This sequence belongs to the SecY/SEC61-alpha family. SecY2 subfamily. In terms of assembly, component of the accessory SecA2/SecY2 protein translocase complex required to export cell wall proteins. May form heterotrimers with SecE and SecG subunits.

It is found in the cell membrane. Functionally, part of the accessory SecA2/SecY2 system specifically required for export of possible cell wall proteins. The central subunit of a protein translocation channel. In Staphylococcus carnosus (strain TM300), this protein is Accessory Sec system protein translocase subunit SecY2.